The sequence spans 156 residues: Small ribosomal subunit protein uS7 (156 aa).

The protein belongs to the universal ribosomal protein uS7 family. Part of the 30S ribosomal subunit. Contacts proteins S9 and S11.

Its function is as follows. One of the primary rRNA binding proteins, it binds directly to 16S rRNA where it nucleates assembly of the head domain of the 30S subunit. Is located at the subunit interface close to the decoding center, probably blocks exit of the E-site tRNA. The chain is Small ribosomal subunit protein uS7 from Alcanivorax borkumensis (strain ATCC 700651 / DSM 11573 / NCIMB 13689 / SK2).